The primary structure comprises 585 residues: Potassium-transporting ATPase potassium-binding subunit (585 aa).

12 helical membrane passes run 23–43 (GVII…ILSF), 85–105 (FINL…VIMF), 152–172 (FVIT…SMAF), 194–214 (IFDL…LAGI), 275–295 (VEFV…GIVF), 307–327 (VVMF…FAGV), 345–365 (AIGI…STGA), 367–387 (NAAL…GLLL), 397–417 (GVLN…LMVG), 444–464 (LLVV…SSFV), 502–522 (LDGV…LIIA), and 547–567 (VLLI…IIVL).

The protein belongs to the KdpA family. In terms of assembly, the system is composed of three essential subunits: KdpA, KdpB and KdpC.

It is found in the cell membrane. Part of the high-affinity ATP-driven potassium transport (or Kdp) system, which catalyzes the hydrolysis of ATP coupled with the electrogenic transport of potassium into the cytoplasm. This subunit binds the extracellular potassium ions and delivers the ions to the membrane domain of KdpB through an intramembrane tunnel. The protein is Potassium-transporting ATPase potassium-binding subunit of Thermoplasma acidophilum (strain ATCC 25905 / DSM 1728 / JCM 9062 / NBRC 15155 / AMRC-C165).